A 373-amino-acid chain; its full sequence is Chaperone protein DnaJ (373 aa).

The 65-residue stretch at 5-69 (DYYEVLGVNK…NKRANYDQFG (65 aa)) folds into the J domain. A CR-type zinc finger spans residues 130–212 (GTKKEISIKK…CKGKGTENKT (83 aa)). Residues Cys-143, Cys-146, Cys-160, Cys-163, Cys-186, Cys-189, Cys-200, and Cys-203 each contribute to the Zn(2+) site. CXXCXGXG motif repeat units lie at residues 143 to 150 (CHTCNGDG), 160 to 167 (CSYCNGAG), 186 to 193 (CPKCEGSG), and 200 to 207 (CPTCKGKG).

It belongs to the DnaJ family. Homodimer. Zn(2+) is required as a cofactor.

It is found in the cytoplasm. Its function is as follows. Participates actively in the response to hyperosmotic and heat shock by preventing the aggregation of stress-denatured proteins and by disaggregating proteins, also in an autonomous, DnaK-independent fashion. Unfolded proteins bind initially to DnaJ; upon interaction with the DnaJ-bound protein, DnaK hydrolyzes its bound ATP, resulting in the formation of a stable complex. GrpE releases ADP from DnaK; ATP binding to DnaK triggers the release of the substrate protein, thus completing the reaction cycle. Several rounds of ATP-dependent interactions between DnaJ, DnaK and GrpE are required for fully efficient folding. Also involved, together with DnaK and GrpE, in the DNA replication of plasmids through activation of initiation proteins. This chain is Chaperone protein DnaJ, found in Staphylococcus epidermidis (strain ATCC 12228 / FDA PCI 1200).